The sequence spans 415 residues: ATP-dependent RNA helicase RhlB (415 aa).

A Q motif motif is present at residues 9–37 (QRFSDLSLHPIVRDTLAKKGFDFCTPIQA). Positions 40–218 (LPISLNGRDV…FEDMNDPEYI (179 aa)) constitute a Helicase ATP-binding domain. 53–60 (AQTGTGKT) provides a ligand contact to ATP. Residues 164-167 (DEAD) carry the DEAD box motif. The Helicase C-terminal domain maps to 241 to 389 (DKMALLLTLM…VSQYETEALL (149 aa)).

Belongs to the DEAD box helicase family. RhlB subfamily. As to quaternary structure, component of the RNA degradosome, which is a multiprotein complex involved in RNA processing and mRNA degradation.

It is found in the cytoplasm. The catalysed reaction is ATP + H2O = ADP + phosphate + H(+). In terms of biological role, DEAD-box RNA helicase involved in RNA degradation. Has RNA-dependent ATPase activity and unwinds double-stranded RNA. This is ATP-dependent RNA helicase RhlB from Haemophilus influenzae (strain PittEE).